The sequence spans 435 residues: Ornithine decarboxylase (435 aa).

Lys-98 carries the N6-(pyridoxal phosphate)lysine modification. Residues Ser-230, Gly-268, and 301–304 (EPGR) contribute to the pyridoxal 5'-phosphate site. 344-345 (YD) contacts substrate. Cys-380 acts as the Proton donor; shared with dimeric partner in catalysis. Asp-381 serves as a coordination point for substrate. Residue Tyr-409 participates in pyridoxal 5'-phosphate binding.

Belongs to the Orn/Lys/Arg decarboxylase class-II family. As to quaternary structure, homodimer. Only the dimer is catalytically active, as the active sites are constructed of residues from both monomers. Requires pyridoxal 5'-phosphate as cofactor.

The enzyme catalyses L-ornithine + H(+) = putrescine + CO2. The protein operates within amine and polyamine biosynthesis; putrescine biosynthesis via L-ornithine pathway; putrescine from L-ornithine: step 1/1. With respect to regulation, inhibited by antizyme (AZ) in response to polyamine levels. AZ inhibits the assembly of the functional homodimer by binding to ODC monomers and targeting them for ubiquitin-independent proteolytic destruction by the 26S proteasome. Its function is as follows. Catalyzes the first and rate-limiting step of polyamine biosynthesis that converts ornithine into putrescine, which is the precursor for the polyamines, spermidine and spermine. Polyamines are essential for cell proliferation and are implicated in cellular processes, ranging from DNA replication to apoptosis. This is Ornithine decarboxylase (ODC) from Capsicum annuum (Capsicum pepper).